The primary structure comprises 582 residues: Aspartate--tRNA ligase (582 aa).

The aspartate stretch occupies residues 198–201 (QIFK). R220 contacts L-aspartate. ATP is bound by residues 220 to 222 (RDE) and Q229. L-aspartate is bound at residue H445. ATP is bound at residue E479. Residue R486 participates in L-aspartate binding. 531 to 534 (GFDR) serves as a coordination point for ATP.

Belongs to the class-II aminoacyl-tRNA synthetase family. Type 1 subfamily. Homodimer.

The protein resides in the cytoplasm. The catalysed reaction is tRNA(Asp) + L-aspartate + ATP = L-aspartyl-tRNA(Asp) + AMP + diphosphate. Catalyzes the attachment of L-aspartate to tRNA(Asp) in a two-step reaction: L-aspartate is first activated by ATP to form Asp-AMP and then transferred to the acceptor end of tRNA(Asp). The sequence is that of Aspartate--tRNA ligase from Amoebophilus asiaticus (strain 5a2).